We begin with the raw amino-acid sequence, 834 residues long: ABC transporter A family member 11 (834 aa).

7 helical membrane-spanning segments follow: residues 35 to 55 (FFILGILLPMISIGASIILNN), 188 to 208 (MPMILQYGFVFFIPYFAILIV), 235 to 255 (VFDYLIFLIPTIIGWILLYSF), 269 to 289 (FLLFLTFGISAIPFGFVLQFI), 297 to 319 (NKWLYPFTSIVTSIPSALISVAF), 324 to 346 (PLIVELLLSILPTFSFCNGLKAL), and 355 to 375 (SYTILIQLLSGLIYLILIYFI). The 242-residue stretch at 452 to 693 (LDKPSIIERC…YGSGYTIDII (242 aa)) folds into the ABC transporter domain. Residue 495–502 (GPNGSGKS) coordinates ATP. The span at 779-789 (KQQTNNKSNII) shows a compositional bias: polar residues. The segment at 779-834 (KQQTNNKSNIINNNNNNNNNNNNNNNNNNNNNNNNNNNNNNNNNTNNNTNNNQLIN) is disordered. Over residues 790-834 (NNNNNNNNNNNNNNNNNNNNNNNNNNNNNNNNNTNNNTNNNQLIN) the composition is skewed to low complexity.

Belongs to the ABC transporter superfamily. ABCA family.

It is found in the membrane. In Dictyostelium discoideum (Social amoeba), this protein is ABC transporter A family member 11 (abcA11).